Here is a 527-residue protein sequence, read N- to C-terminus: Methane monooxygenase component A alpha chain (527 aa).

Glu114, Glu144, and His147 together coordinate Fe cation. Cys151 is an active-site residue. The Fe cation site is built by Glu209, Glu243, and His246.

Belongs to the TmoA/XamoA family. As to quaternary structure, m.capsulatus has two forms of methane monooxygenase, a soluble and a membrane-bound type. The soluble type consists of four components (A to D): protein A, comprising three chains, in an alpha-2, beta-2, gamma-2 configuration, is a nonheme iron protein containing an unusual mu-hydroxo bridge structure at its active site and interacts with both oxygen and methane. Requires Fe cation as cofactor.

The enzyme catalyses methane + NADH + O2 + H(+) = methanol + NAD(+) + H2O. It carries out the reaction methane + NADPH + O2 + H(+) = methanol + NADP(+) + H2O. Responsible for the initial oxygenation of methane to methanol in methanotrophs. It also catalyzes the monohydroxylation of a variety of unactivated alkenes, alicyclic, aromatic and heterocyclic compounds. The chain is Methane monooxygenase component A alpha chain (mmoX) from Methylococcus capsulatus (strain ATCC 33009 / NCIMB 11132 / Bath).